A 118-amino-acid chain; its full sequence is Large ribosomal subunit protein uL18 (118 aa).

The protein belongs to the universal ribosomal protein uL18 family. As to quaternary structure, part of the 50S ribosomal subunit; part of the 5S rRNA/L5/L18/L25 subcomplex. Contacts the 5S and 23S rRNAs.

This is one of the proteins that bind and probably mediate the attachment of the 5S RNA into the large ribosomal subunit, where it forms part of the central protuberance. This Rickettsia canadensis (strain McKiel) protein is Large ribosomal subunit protein uL18.